The sequence spans 160 residues: Nucleotide-binding protein MADE_1020535 (160 aa).

The protein belongs to the YajQ family.

Functionally, nucleotide-binding protein. The protein is Nucleotide-binding protein MADE_1020535 of Alteromonas mediterranea (strain DSM 17117 / CIP 110805 / LMG 28347 / Deep ecotype).